Consider the following 229-residue polypeptide: Large ribosomal subunit protein uL1 (229 aa).

Belongs to the universal ribosomal protein uL1 family. As to quaternary structure, part of the 50S ribosomal subunit.

In terms of biological role, binds directly to 23S rRNA. The L1 stalk is quite mobile in the ribosome, and is involved in E site tRNA release. Functionally, protein L1 is also a translational repressor protein, it controls the translation of the L11 operon by binding to its mRNA. In Chlorobium chlorochromatii (strain CaD3), this protein is Large ribosomal subunit protein uL1.